The chain runs to 461 residues: Argininosuccinate lyase (461 aa).

It belongs to the lyase 1 family. Argininosuccinate lyase subfamily.

It localises to the cytoplasm. The catalysed reaction is 2-(N(omega)-L-arginino)succinate = fumarate + L-arginine. It participates in amino-acid biosynthesis; L-arginine biosynthesis; L-arginine from L-ornithine and carbamoyl phosphate: step 3/3. This is Argininosuccinate lyase from Dehalococcoides mccartyi (strain ATCC BAA-2266 / KCTC 15142 / 195) (Dehalococcoides ethenogenes (strain 195)).